The following is a 212-amino-acid chain: Cytidylate kinase (212 aa).

ATP is bound at residue 7–15; sequence GPAASGKGT.

The protein belongs to the cytidylate kinase family. Type 1 subfamily.

Its subcellular location is the cytoplasm. It carries out the reaction CMP + ATP = CDP + ADP. The catalysed reaction is dCMP + ATP = dCDP + ADP. This Rhodopseudomonas palustris (strain ATCC BAA-98 / CGA009) protein is Cytidylate kinase.